Here is a 638-residue protein sequence, read N- to C-terminus: MQVEHEVATEGGQAPASSGHRKGIAGLAVAAIGVVYGDIGTSPLYTLKEVFNGPHAVPVNEANVYGILSLVFWALVTVVSAKYVVFITRADNRGEGGIMALTSLALRVVQPGRRAWWLSVLGVFGAALFYGDGMITPAISVLSAVEGLEVATPAFKPFVIPIALVVLVGLFVMQRRGTGSVGAIFGPVMVCWFLVLAVLGINGITLHPEIIGALDPRWAARFFIDQPLIGWLALGAVVLAITGGEALYADMGHFGRRPIKLAWFSLVFPALYLNYLGQGALILDHPDNVRNPFYMLVPDALVYPMVGMATLATIIASQAVISGAFSLTRQAIQLGYAPRMQTLHTSEHEIGQIYVPGVNWMLLGAVVALVVGFQSSSALASAYGIAVTLTMMIDTVLAFVVVRSLWKWGRAKAVLFLVVFLAVDIAFFSATTVKIFAGGWFPLLIGAAIFTLLRTWKRGRSLLNERIRSDTMPLDIFIQSMFQSPPPRVEGTAVFMTTWLDGVPRALLHNLIHNKVLHERVVLLRVDTADVPHVPEGERVEVEEIDYGFYRVRVHYGFKDDPDIPAALGLCAQRGLPFDMMETSFFLGRETLVSRVGSGMPQWREKLFILLFRNAGSAADYFCIPPNRVVELGTQVEL.

The segment at 1 to 20 (MQVEHEVATEGGQAPASSGH) is disordered. The next 12 membrane-spanning stretches (helical) occupy residues 24 to 44 (IAGLAVAAIGVVYGDIGTSPL), 67 to 87 (ILSLVFWALVTVVSAKYVVFI), 115 to 135 (AWWLSVLGVFGAALFYGDGMI), 153 to 173 (PAFKPFVIPIALVVLVGLFVM), 181 to 201 (VGAIFGPVMVCWFLVLAVLGI), 228 to 248 (LIGWLALGAVVLAITGGEALY), 263 to 283 (WFSLVFPALYLNYLGQGALIL), 301 to 321 (LVYPMVGMATLATIIASQAVI), 353 to 373 (IYVPGVNWMLLGAVVALVVGF), 382 to 402 (AYGIAVTLTMMIDTVLAFVVV), 413 to 433 (AVLFLVVFLAVDIAFFSATTV), and 435 to 455 (IFAGGWFPLLIGAAIFTLLRT).

The protein belongs to the HAK/KUP transporter (TC 2.A.72) family.

It localises to the cell inner membrane. It catalyses the reaction K(+)(in) + H(+)(in) = K(+)(out) + H(+)(out). In terms of biological role, transport of potassium into the cell. Likely operates as a K(+):H(+) symporter. This is Probable potassium transport system protein Kup from Azoarcus sp. (strain BH72).